The following is a 274-amino-acid chain: uncharacterized protein (274 aa).

The next 5 helical transmembrane spans lie at 9–29 (SLLL…VSIL), 64–84 (WFWH…FFIL), 135–155 (LAGH…ALLL), 165–185 (MSSM…WQNA), and 219–239 (IIVY…LVLG).

This sequence belongs to the steroid 5-alpha reductase family.

It localises to the endoplasmic reticulum membrane. This is an uncharacterized protein from Schizosaccharomyces pombe (strain 972 / ATCC 24843) (Fission yeast).